The primary structure comprises 338 residues: MNLSKFKRYPLTFGPSPITPLKRLSEHLGGKVDLYAKREDCNSGLAFGGNKTRKLEYLVPEAIEGGYDTLVSIGGIQSNQTRQVAAVAAHLGMKCVLVQENWVNYSDALYDRVGNIEMSRIMGADVRLDSAGFDIGIRPSWEKAMADVVESGGKPFPIPAGCSEHPYGGLGFVRFADEVRQQEEELGFKFDYIVVCSVTGSTHAGMLVGFAADGRAQRVIGIDASAKPDKTREQVLRIAQNTAKLVDLGREITAEDVVLDTRYAYPEYGLPNDGTLEAIRLCARLEGVLTDPVYEGKSMHGMIDMVRNGEFPEGSKVLYAHLGGVPALNAYSFLFKDG.

Lys51 bears the N6-(pyridoxal phosphate)lysine mark. Ser78 acts as the Nucleophile in catalysis.

This sequence belongs to the ACC deaminase/D-cysteine desulfhydrase family. As to quaternary structure, homotrimer. Pyridoxal 5'-phosphate is required as a cofactor.

It carries out the reaction 1-aminocyclopropane-1-carboxylate + H2O = 2-oxobutanoate + NH4(+). Its function is as follows. Catalyzes a cyclopropane ring-opening reaction, the irreversible conversion of 1-aminocyclopropane-1-carboxylate (ACC) to ammonia and alpha-ketobutyrate. Allows growth on ACC as a nitrogen source. The chain is 1-aminocyclopropane-1-carboxylate deaminase from Pseudomonas syringae pv. tomato (strain ATCC BAA-871 / DC3000).